Consider the following 234-residue polypeptide: Small ribosomal subunit protein uS3 (234 aa).

Positions 39-107 (IRKFLKKELY…EVSINIKEVK (69 aa)) constitute a KH type-2 domain.

Belongs to the universal ribosomal protein uS3 family. Part of the 30S ribosomal subunit. Forms a tight complex with proteins S10 and S14.

Its function is as follows. Binds the lower part of the 30S subunit head. Binds mRNA in the 70S ribosome, positioning it for translation. The chain is Small ribosomal subunit protein uS3 from Helicobacter pylori (strain J99 / ATCC 700824) (Campylobacter pylori J99).